Reading from the N-terminus, the 135-residue chain is MVLETISRIIKIQLPAYLKKLPLPETIGGFARLTVSDWLRLLPLLGILALLGYLTIRPFLPKKKKQKDSLINLEIQKENPKVVNEIDIEDLNRTNVCYCRCWRSKTFPVCDKSHIKHNELTGDNVGPLILKKKIL.

The Lumenal portion of the chain corresponds to 1 to 37 (MVLETISRIIKIQLPAYLKKLPLPETIGGFARLTVSD). Residues 38-60 (WLRLLPLLGILALLGYLTIRPFL) form a helical membrane-spanning segment. The Cytoplasmic portion of the chain corresponds to 61-135 (PKKKKQKDSL…GPLILKKKIL (75 aa)). [2Fe-2S] cluster contacts are provided by cysteine 99, cysteine 101, cysteine 110, and histidine 114.

Belongs to the CISD protein family. CISD2 subfamily. Homodimer. [2Fe-2S] cluster is required as a cofactor.

The protein localises to the endoplasmic reticulum membrane. It is found in the mitochondrion outer membrane. Its function is as follows. Regulator of autophagy that contributes to antagonize becn1-mediated cellular autophagy at the endoplasmic reticulum. Participates in the interaction of bcl2 with becn1 and is required for bcl2-mediated depression of endoplasmic reticulum Ca(2+) stores during autophagy. The sequence is that of CDGSH iron-sulfur domain-containing protein 2A (cisd2a) from Oncorhynchus mykiss (Rainbow trout).